The chain runs to 246 residues: Pyridoxine 5'-phosphate synthase (246 aa).

Asparagine 12 contributes to the 3-amino-2-oxopropyl phosphate binding site. 14 to 15 is a binding site for 1-deoxy-D-xylulose 5-phosphate; the sequence is DH. Arginine 23 is a binding site for 3-amino-2-oxopropyl phosphate. The active-site Proton acceptor is the histidine 48. 1-deoxy-D-xylulose 5-phosphate-binding residues include arginine 50 and histidine 55. The active-site Proton acceptor is glutamate 75. 1-deoxy-D-xylulose 5-phosphate is bound at residue threonine 105. Histidine 196 functions as the Proton donor in the catalytic mechanism. 3-amino-2-oxopropyl phosphate is bound by residues glycine 197 and 218–219; that span reads GH.

It belongs to the PNP synthase family. Homooctamer; tetramer of dimers.

It localises to the cytoplasm. It carries out the reaction 3-amino-2-oxopropyl phosphate + 1-deoxy-D-xylulose 5-phosphate = pyridoxine 5'-phosphate + phosphate + 2 H2O + H(+). It functions in the pathway cofactor biosynthesis; pyridoxine 5'-phosphate biosynthesis; pyridoxine 5'-phosphate from D-erythrose 4-phosphate: step 5/5. In terms of biological role, catalyzes the complicated ring closure reaction between the two acyclic compounds 1-deoxy-D-xylulose-5-phosphate (DXP) and 3-amino-2-oxopropyl phosphate (1-amino-acetone-3-phosphate or AAP) to form pyridoxine 5'-phosphate (PNP) and inorganic phosphate. In Pseudomonas syringae pv. syringae (strain B728a), this protein is Pyridoxine 5'-phosphate synthase.